Here is a 421-residue protein sequence, read N- to C-terminus: D-amino acid dehydrogenase (421 aa).

3-17 (VIVLGSGVIGVASAY) is a binding site for FAD.

It belongs to the DadA oxidoreductase family. It depends on FAD as a cofactor.

It catalyses the reaction a D-alpha-amino acid + A + H2O = a 2-oxocarboxylate + AH2 + NH4(+). The protein operates within amino-acid degradation; D-alanine degradation; NH(3) and pyruvate from D-alanine: step 1/1. Its function is as follows. Oxidative deamination of D-amino acids. The chain is D-amino acid dehydrogenase from Acinetobacter baumannii (strain SDF).